The primary structure comprises 79 residues: Sulfur carrier protein TusA (79 aa).

Cysteine 17 (cysteine persulfide intermediate) is an active-site residue.

The protein belongs to the sulfur carrier protein TusA family.

Its subcellular location is the cytoplasm. Functionally, sulfur carrier protein which probably makes part of a sulfur-relay system. The chain is Sulfur carrier protein TusA from Histophilus somni (strain 129Pt) (Haemophilus somnus).